The primary structure comprises 104 residues: MYAIIMTGGKQYRVSEGDTLRVEKLPAEVGEKVVLDKVLAVGEGADLKVGNPYVEGAKVTASVQAQDKAPKIIVFKYKPKKNYRRKQGHRQPYTQLQIEKIEIQ.

It belongs to the bacterial ribosomal protein bL21 family. In terms of assembly, part of the 50S ribosomal subunit. Contacts protein L20.

In terms of biological role, this protein binds to 23S rRNA in the presence of protein L20. The sequence is that of Large ribosomal subunit protein bL21 from Moorella thermoacetica (strain ATCC 39073 / JCM 9320).